The sequence spans 511 residues: Cytochrome P450 4B1 (511 aa).

Residues Glu-315 and Cys-453 each contribute to the heme site.

The protein belongs to the cytochrome P450 family. Heme is required as a cofactor.

Its subcellular location is the endoplasmic reticulum membrane. It localises to the microsome membrane. The enzyme catalyses an organic molecule + reduced [NADPH--hemoprotein reductase] + O2 = an alcohol + oxidized [NADPH--hemoprotein reductase] + H2O + H(+). In terms of biological role, cytochromes P450 are a group of heme-thiolate monooxygenases. In liver microsomes, this enzyme is involved in an NADPH-dependent electron transport pathway. It oxidizes a variety of structurally unrelated compounds, including steroids, fatty acids, and xenobiotics. The chain is Cytochrome P450 4B1 (Cyp4b1) from Rattus norvegicus (Rat).